The primary structure comprises 715 residues: Phosphoribosylformylglycinamidine synthase subunit PurL (715 aa).

Residue His33 is part of the active site. Tyr36 provides a ligand contact to ATP. Position 77 (Glu77) interacts with Mg(2+). Substrate-binding positions include 78-81 (SHNH) and Arg100. The active-site Proton acceptor is His79. Asp101 lines the Mg(2+) pocket. Gln225 is a substrate binding site. Residue Asp253 participates in Mg(2+) binding. 297-299 (ESQ) contacts substrate. Residues Asn476 and Gly513 each coordinate ATP. Asn514 is a binding site for Mg(2+). A substrate-binding site is contributed by Ser516.

It belongs to the FGAMS family. As to quaternary structure, monomer. Part of the FGAM synthase complex composed of 1 PurL, 1 PurQ and 2 PurS subunits.

The protein localises to the cytoplasm. It catalyses the reaction N(2)-formyl-N(1)-(5-phospho-beta-D-ribosyl)glycinamide + L-glutamine + ATP + H2O = 2-formamido-N(1)-(5-O-phospho-beta-D-ribosyl)acetamidine + L-glutamate + ADP + phosphate + H(+). The protein operates within purine metabolism; IMP biosynthesis via de novo pathway; 5-amino-1-(5-phospho-D-ribosyl)imidazole from N(2)-formyl-N(1)-(5-phospho-D-ribosyl)glycinamide: step 1/2. Part of the phosphoribosylformylglycinamidine synthase complex involved in the purines biosynthetic pathway. Catalyzes the ATP-dependent conversion of formylglycinamide ribonucleotide (FGAR) and glutamine to yield formylglycinamidine ribonucleotide (FGAM) and glutamate. The FGAM synthase complex is composed of three subunits. PurQ produces an ammonia molecule by converting glutamine to glutamate. PurL transfers the ammonia molecule to FGAR to form FGAM in an ATP-dependent manner. PurS interacts with PurQ and PurL and is thought to assist in the transfer of the ammonia molecule from PurQ to PurL. This chain is Phosphoribosylformylglycinamidine synthase subunit PurL, found in Methanosarcina barkeri (strain Fusaro / DSM 804).